The primary structure comprises 206 residues: Thiamine-phosphate synthase (206 aa).

4-amino-2-methyl-5-(diphosphooxymethyl)pyrimidine contacts are provided by residues 35–39 and N67; that span reads QLRHK. Positions 68 and 87 each coordinate Mg(2+). S106 is a binding site for 4-amino-2-methyl-5-(diphosphooxymethyl)pyrimidine. Position 132–134 (132–134) interacts with 2-[(2R,5Z)-2-carboxy-4-methylthiazol-5(2H)-ylidene]ethyl phosphate; it reads TGS. A 4-amino-2-methyl-5-(diphosphooxymethyl)pyrimidine-binding site is contributed by K135. Residue G163 coordinates 2-[(2R,5Z)-2-carboxy-4-methylthiazol-5(2H)-ylidene]ethyl phosphate.

Belongs to the thiamine-phosphate synthase family. It depends on Mg(2+) as a cofactor.

The enzyme catalyses 2-[(2R,5Z)-2-carboxy-4-methylthiazol-5(2H)-ylidene]ethyl phosphate + 4-amino-2-methyl-5-(diphosphooxymethyl)pyrimidine + 2 H(+) = thiamine phosphate + CO2 + diphosphate. It catalyses the reaction 2-(2-carboxy-4-methylthiazol-5-yl)ethyl phosphate + 4-amino-2-methyl-5-(diphosphooxymethyl)pyrimidine + 2 H(+) = thiamine phosphate + CO2 + diphosphate. The catalysed reaction is 4-methyl-5-(2-phosphooxyethyl)-thiazole + 4-amino-2-methyl-5-(diphosphooxymethyl)pyrimidine + H(+) = thiamine phosphate + diphosphate. It participates in cofactor biosynthesis; thiamine diphosphate biosynthesis; thiamine phosphate from 4-amino-2-methyl-5-diphosphomethylpyrimidine and 4-methyl-5-(2-phosphoethyl)-thiazole: step 1/1. Functionally, condenses 4-methyl-5-(beta-hydroxyethyl)thiazole monophosphate (THZ-P) and 2-methyl-4-amino-5-hydroxymethyl pyrimidine pyrophosphate (HMP-PP) to form thiamine monophosphate (TMP). The chain is Thiamine-phosphate synthase from Chlorobium phaeobacteroides (strain DSM 266 / SMG 266 / 2430).